The sequence spans 156 residues: Ribosomal RNA large subunit methyltransferase H (156 aa).

Residues Leu-74, Gly-105, and 124 to 129 (LSKLTL) contribute to the S-adenosyl-L-methionine site.

The protein belongs to the RNA methyltransferase RlmH family. In terms of assembly, homodimer.

Its subcellular location is the cytoplasm. The catalysed reaction is pseudouridine(1915) in 23S rRNA + S-adenosyl-L-methionine = N(3)-methylpseudouridine(1915) in 23S rRNA + S-adenosyl-L-homocysteine + H(+). Specifically methylates the pseudouridine at position 1915 (m3Psi1915) in 23S rRNA. The chain is Ribosomal RNA large subunit methyltransferase H from Legionella pneumophila (strain Paris).